The primary structure comprises 375 residues: Saccharopine dehydrogenase [NAD(+), L-lysine-forming] (375 aa).

The L-saccharopine site is built by Arg-18 and Lys-78. The active-site Proton acceptor is the Lys-78. His-96 functions as the Proton donor in the catalytic mechanism. L-saccharopine is bound at residue Gln-101. Residue Arg-130 participates in NAD(+) binding. L-saccharopine-binding residues include Arg-131 and Phe-135. NAD(+)-binding positions include 203 to 204 (GR), Asp-227, Thr-231, Tyr-252, and Val-279. A disulfide bridge links Cys-205 with Cys-250. Residue 280–282 (SAD) coordinates L-saccharopine. NAD(+) is bound at residue 322 to 325 (IDHL).

The protein belongs to the AlaDH/PNT family. In terms of assembly, monomer.

The catalysed reaction is L-saccharopine + NAD(+) + H2O = L-lysine + 2-oxoglutarate + NADH + H(+). Its pathway is amino-acid biosynthesis; L-lysine biosynthesis via AAA pathway; L-lysine from L-alpha-aminoadipate (fungal route): step 3/3. Its function is as follows. Catalyzes the NAD(+)-dependent cleavage of saccharopine to L-lysine and 2-oxoglutarate, the final step in the alpha-aminoadipate (AAA) pathway for lysin biosynthesis. The chain is Saccharopine dehydrogenase [NAD(+), L-lysine-forming] from Emericella nidulans (strain FGSC A4 / ATCC 38163 / CBS 112.46 / NRRL 194 / M139) (Aspergillus nidulans).